We begin with the raw amino-acid sequence, 205 residues long: Small ribosomal subunit protein uS4 (205 aa).

One can recognise an S4 RNA-binding domain in the interval 91 to 149; sequence MRLDALVLRAAFARSISQARQLVVHRHILVDGKLVDRPSYSVSPGQTVKVKPKSVPLDP.

Belongs to the universal ribosomal protein uS4 family. Part of the 30S ribosomal subunit. Contacts protein S5. The interaction surface between S4 and S5 is involved in control of translational fidelity.

In terms of biological role, one of the primary rRNA binding proteins, it binds directly to 16S rRNA where it nucleates assembly of the body of the 30S subunit. Its function is as follows. With S5 and S12 plays an important role in translational accuracy. The polypeptide is Small ribosomal subunit protein uS4 (Tropheryma whipplei (strain TW08/27) (Whipple's bacillus)).